The chain runs to 245 residues: 1-(5-phosphoribosyl)-5-[(5-phosphoribosylamino)methylideneamino] imidazole-4-carboxamide isomerase (245 aa).

Residue aspartate 7 is the Proton acceptor of the active site. The Proton donor role is filled by aspartate 129.

The protein belongs to the HisA/HisF family.

The protein resides in the cytoplasm. The enzyme catalyses 1-(5-phospho-beta-D-ribosyl)-5-[(5-phospho-beta-D-ribosylamino)methylideneamino]imidazole-4-carboxamide = 5-[(5-phospho-1-deoxy-D-ribulos-1-ylimino)methylamino]-1-(5-phospho-beta-D-ribosyl)imidazole-4-carboxamide. Its pathway is amino-acid biosynthesis; L-histidine biosynthesis; L-histidine from 5-phospho-alpha-D-ribose 1-diphosphate: step 4/9. The sequence is that of 1-(5-phosphoribosyl)-5-[(5-phosphoribosylamino)methylideneamino] imidazole-4-carboxamide isomerase from Escherichia coli (strain ATCC 8739 / DSM 1576 / NBRC 3972 / NCIMB 8545 / WDCM 00012 / Crooks).